Consider the following 155-residue polypeptide: MNSTKRLKMSTTFHDYDLEEPLTSNARPLKNSVITIRVIKSFPYRNVKNIVLHDYDLADKTAKDLFNDVLNKIQNEGSFRPFRNVKFDTLKIYTHAHGSKTVNLVINFDHDDDWTLDIENDKKKLFEYGIENETEISLFNKEDYLRFKENPEEKW.

Phosphoserine is present on serine 78.

It belongs to the UPF0538 family.

It localises to the cytoplasm. Functionally, may be involved in mitochondrial organization and biogenesis. The sequence is that of Altered inheritance rate of mitochondria protein 29 (AIM29) from Saccharomyces cerevisiae (strain ATCC 204508 / S288c) (Baker's yeast).